We begin with the raw amino-acid sequence, 292 residues long: Pyridoxal 5'-phosphate synthase subunit PdxS (292 aa).

D22 contributes to the D-ribose 5-phosphate binding site. Catalysis depends on K79, which acts as the Schiff-base intermediate with D-ribose 5-phosphate. G151 contacts D-ribose 5-phosphate. R163 contributes to the D-glyceraldehyde 3-phosphate binding site. D-ribose 5-phosphate contacts are provided by residues G212 and 233–234; that span reads GS.

The protein belongs to the PdxS/SNZ family. As to quaternary structure, in the presence of PdxT, forms a dodecamer of heterodimers.

It catalyses the reaction aldehydo-D-ribose 5-phosphate + D-glyceraldehyde 3-phosphate + L-glutamine = pyridoxal 5'-phosphate + L-glutamate + phosphate + 3 H2O + H(+). It functions in the pathway cofactor biosynthesis; pyridoxal 5'-phosphate biosynthesis. Functionally, catalyzes the formation of pyridoxal 5'-phosphate from ribose 5-phosphate (RBP), glyceraldehyde 3-phosphate (G3P) and ammonia. The ammonia is provided by the PdxT subunit. Can also use ribulose 5-phosphate and dihydroxyacetone phosphate as substrates, resulting from enzyme-catalyzed isomerization of RBP and G3P, respectively. This is Pyridoxal 5'-phosphate synthase subunit PdxS from Thermoanaerobacter pseudethanolicus (strain ATCC 33223 / 39E) (Clostridium thermohydrosulfuricum).